A 1132-amino-acid chain; its full sequence is Major DNA-binding protein (1132 aa).

Positions Val1103–Leu1132 are required for nuclear localization.

The protein belongs to the herpesviridae major DNA-binding protein family. Homooligomers. Forms double-helical filaments necessary for the formation of replication compartments within the host nucleus. Interacts with the origin-binding protein. Interacts with the helicase primase complex; this interaction stimulates primer synthesis activity of the helicase-primase complex. Interacts with the DNA polymerase. Interacts with the alkaline exonuclease; this interaction increases its nuclease processivity.

The protein localises to the host nucleus. Its function is as follows. Plays several crucial roles in viral infection. Participates in the opening of the viral DNA origin to initiate replication by interacting with the origin-binding protein. May disrupt loops, hairpins and other secondary structures present on ssDNA to reduce and eliminate pausing of viral DNA polymerase at specific sites during elongation. Promotes viral DNA recombination by performing strand-transfer, characterized by the ability to transfer a DNA strand from a linear duplex to a complementary single-stranded DNA circle. Can also catalyze the renaturation of complementary single strands. Additionally, reorganizes the host cell nucleus, leading to the formation of prereplicative sites and replication compartments. This process is driven by the protein which can form double-helical filaments in the absence of DNA. This chain is Major DNA-binding protein, found in Human herpesvirus 8 type P (isolate GK18) (HHV-8).